The chain runs to 506 residues: Maturase K (506 aa).

The protein belongs to the intron maturase 2 family. MatK subfamily.

It localises to the plastid. Its subcellular location is the chloroplast. Its function is as follows. Usually encoded in the trnK tRNA gene intron. Probably assists in splicing its own and other chloroplast group II introns. The chain is Maturase K from Medicago sativa (Alfalfa).